Consider the following 156-residue polypeptide: Ribosomal RNA large subunit methyltransferase H (156 aa).

Residues Leu-73, Gly-104, and 123-128 each bind S-adenosyl-L-methionine; that span reads LSPLTL.

Belongs to the RNA methyltransferase RlmH family. Homodimer.

It is found in the cytoplasm. It catalyses the reaction pseudouridine(1915) in 23S rRNA + S-adenosyl-L-methionine = N(3)-methylpseudouridine(1915) in 23S rRNA + S-adenosyl-L-homocysteine + H(+). Its function is as follows. Specifically methylates the pseudouridine at position 1915 (m3Psi1915) in 23S rRNA. In Yersinia enterocolitica serotype O:8 / biotype 1B (strain NCTC 13174 / 8081), this protein is Ribosomal RNA large subunit methyltransferase H.